The primary structure comprises 238 residues: tRNA (guanine-N(7)-)-methyltransferase (238 aa).

The S-adenosyl-L-methionine site is built by glutamate 70, aspartate 95, aspartate 122, and aspartate 145. Residue aspartate 145 is part of the active site. Substrate-binding positions include lysine 149, aspartate 181, and 216–219 (TKFE).

The protein belongs to the class I-like SAM-binding methyltransferase superfamily. TrmB family.

It catalyses the reaction guanosine(46) in tRNA + S-adenosyl-L-methionine = N(7)-methylguanosine(46) in tRNA + S-adenosyl-L-homocysteine. Its pathway is tRNA modification; N(7)-methylguanine-tRNA biosynthesis. Functionally, catalyzes the formation of N(7)-methylguanine at position 46 (m7G46) in tRNA. In Neisseria meningitidis serogroup C / serotype 2a (strain ATCC 700532 / DSM 15464 / FAM18), this protein is tRNA (guanine-N(7)-)-methyltransferase.